A 185-amino-acid polypeptide reads, in one-letter code: Sulfopyruvate decarboxylase subunit beta (185 aa).

It belongs to the TPP enzyme family. In terms of assembly, heterododecamer composed of 6 subunits alpha and 6 subunits beta. Thiamine diphosphate serves as cofactor.

It catalyses the reaction 3-sulfopyruvate + H(+) = sulfoacetaldehyde + CO2. It participates in cofactor biosynthesis; coenzyme M biosynthesis; sulfoacetaldehyde from phosphoenolpyruvate and sulfite: step 4/4. Its function is as follows. Involved in the biosynthesis of the coenzyme M (2-mercaptoethanesulfonic acid). Catalyzes the decarboxylation of sulfopyruvate to sulfoacetaldehyde. The protein is Sulfopyruvate decarboxylase subunit beta of Methanothermobacter thermautotrophicus (strain ATCC 29096 / DSM 1053 / JCM 10044 / NBRC 100330 / Delta H) (Methanobacterium thermoautotrophicum).